The primary structure comprises 258 residues: Thrombin-like enzyme ancrod-2 (258 aa).

Positions 1 to 18 (MVLIRVLANLVILQLSYA) are cleaved as a signal peptide. Residues 19–24 (QKSSEL) constitute a propeptide that is removed on maturation. A Peptidase S1 domain is found at 25 to 251 (VIGGDECNIN…HLHWILSIMA (227 aa)). Cystine bridges form between cysteine 31–cysteine 165, cysteine 52–cysteine 68, cysteine 102–cysteine 256, cysteine 144–cysteine 212, cysteine 176–cysteine 191, and cysteine 202–cysteine 227. Residues histidine 67 and aspartate 112 each act as charge relay system in the active site. N-linked (GlcNAc...) asparagine glycosylation is found at asparagine 123 and asparagine 172. The Charge relay system role is filled by serine 206. An N-linked (GlcNAc...) asparagine glycan is attached at asparagine 253.

Belongs to the peptidase S1 family. Snake venom subfamily. Monomer. Expressed by the venom gland.

The protein resides in the secreted. The catalysed reaction is Selective cleavage of Arg-|-Xaa bond in fibrinogen, to form fibrin, and release fibrinopeptide A. The specificity of further degradation of fibrinogen varies with species origin of the enzyme.. In terms of biological role, thrombin-like snake venom serine protease. Cleaves fibrinogen (FGA) to split of fibrinopeptides AM, AO, and AY; the aberrant fibrinogen is then incapable of being cross-linked, forming easily dispersible clots. The sequence is that of Thrombin-like enzyme ancrod-2 from Calloselasma rhodostoma (Malayan pit viper).